The chain runs to 304 residues: Coenzyme PQQ synthesis protein B (304 aa).

The protein belongs to the PqqB family.

It participates in cofactor biosynthesis; pyrroloquinoline quinone biosynthesis. Its function is as follows. May be involved in the transport of PQQ or its precursor to the periplasm. This chain is Coenzyme PQQ synthesis protein B, found in Stutzerimonas stutzeri (Pseudomonas stutzeri).